A 632-amino-acid chain; its full sequence is tRNA uridine 5-carboxymethylaminomethyl modification enzyme MnmG (632 aa).

13–18 is an FAD binding site; the sequence is GGGHAG. NAD(+) is bound at residue 274–288; sequence GPRYCPSIEDKVMRF.

Belongs to the MnmG family. Homodimer. Heterotetramer of two MnmE and two MnmG subunits. FAD serves as cofactor.

The protein resides in the cytoplasm. NAD-binding protein involved in the addition of a carboxymethylaminomethyl (cmnm) group at the wobble position (U34) of certain tRNAs, forming tRNA-cmnm(5)s(2)U34. The polypeptide is tRNA uridine 5-carboxymethylaminomethyl modification enzyme MnmG (Dichelobacter nodosus (strain VCS1703A)).